Reading from the N-terminus, the 424-residue chain is Hemagglutinin-esterase (424 aa).

Positions 1–16 (MFLLPRFVLVSCIIGS) are cleaved as a signal peptide. Residues 7-127 (FVLVSCIIGS…SNDIWMQNKG (121 aa)) are esterase domain 1. Topologically, residues 17 to 392 (LGFDNPPTNV…PICVYDPLPI (376 aa)) are virion surface. S40 (nucleophile) is an active-site residue. The cysteines at positions 44 and 65 are disulfide-linked. N54, N89, N153, N236, and N301 each carry an N-linked (GlcNAc...) asparagine; by host glycan. 3 disulfide bridges follow: C113/C162, C197/C276, and C205/C249. The tract at residues 128–266 (LFYTQVYKNM…GNYLAISNEL (139 aa)) is receptor binding. The tract at residues 267 to 379 (LLTVPTKAIC…RCPTAADINT (113 aa)) is esterase domain 2. C307 and C312 are disulfide-bonded. A glycan (N-linked (GlcNAc...) asparagine; by host) is linked at N316. Residues D326 and H329 each act as charge relay system in the active site. A disulfide bridge connects residues C347 and C371. N358 is a glycosylation site (N-linked (GlcNAc...) asparagine; by host). The helical transmembrane segment at 393-413 (ILLGILLGVAVIIIVVLLLYF) threads the bilayer. Topologically, residues 414-424 (MVDNGTRLHDA) are intravirion. The N-linked (GlcNAc...) asparagine; by host glycan is linked to N417.

Belongs to the influenza type C/coronaviruses hemagglutinin-esterase family. In terms of assembly, homodimer; disulfide-linked. Forms a complex with the M protein in the pre-Golgi. Associates then with S-M complex to form a ternary complex S-M-HE. N-glycosylated in the RER. Post-translationally, N-glycosylated in the host RER.

The protein resides in the virion membrane. It localises to the host cell membrane. The catalysed reaction is N-acetyl-9-O-acetylneuraminate + H2O = N-acetylneuraminate + acetate + H(+). It carries out the reaction N-acetyl-4-O-acetylneuraminate + H2O = N-acetylneuraminate + acetate + H(+). Its function is as follows. Structural protein that makes short spikes at the surface of the virus. Contains receptor binding and receptor-destroying activities. Mediates de-O-acetylation of N-acetyl-4-O-acetylneuraminic acid, which is probably the receptor determinant recognized by the virus on the surface of erythrocytes and susceptible cells. This receptor-destroying activity is important for virus release as it probably helps preventing self-aggregation and ensures the efficient spread of the progeny virus from cell to cell. May serve as a secondary viral attachment protein for initiating infection, the spike protein being the major one. May become a target for both the humoral and the cellular branches of the immune system. This chain is Hemagglutinin-esterase, found in Bovine coronavirus (strain 98TXSF-110-ENT) (BCoV-ENT).